Here is a 115-residue protein sequence, read N- to C-terminus: Aspartate 1-decarboxylase (115 aa).

Ser25 (schiff-base intermediate with substrate; via pyruvic acid) is an active-site residue. Position 25 is a pyruvic acid (Ser) (Ser25). Thr57 is a binding site for substrate. Tyr58 serves as the catalytic Proton donor. 73 to 75 (GPA) contacts substrate.

The protein belongs to the PanD family. As to quaternary structure, heterooctamer of four alpha and four beta subunits. It depends on pyruvate as a cofactor. In terms of processing, is synthesized initially as an inactive proenzyme, which is activated by self-cleavage at a specific serine bond to produce a beta-subunit with a hydroxyl group at its C-terminus and an alpha-subunit with a pyruvoyl group at its N-terminus.

The protein resides in the cytoplasm. It catalyses the reaction L-aspartate + H(+) = beta-alanine + CO2. The protein operates within cofactor biosynthesis; (R)-pantothenate biosynthesis; beta-alanine from L-aspartate: step 1/1. Its function is as follows. Catalyzes the pyruvoyl-dependent decarboxylation of aspartate to produce beta-alanine. This is Aspartate 1-decarboxylase from Cytophaga hutchinsonii (strain ATCC 33406 / DSM 1761 / CIP 103989 / NBRC 15051 / NCIMB 9469 / D465).